The primary structure comprises 271 residues: Delta(7)-sterol-C5(6)-desaturase (271 aa).

A run of 2 helical transmembrane segments spans residues 44 to 64 and 120 to 140; these read IGGV…IYHL and VGWL…EFGI. A Fatty acid hydroxylase domain is found at 130–259; sequence AIYLVIVEFG…TIWMDWMFGT (130 aa). The Histidine box-1 signature appears at 144–148; the sequence is HMELH. Positions 158–162 match the Histidine box-2 motif; it reads HATHH. A helical transmembrane segment spans residues 190–210; it reads HVVALLLVPMHFSTHIALIFL. Residues 235–239 carry the Histidine box-3 motif; that stretch reads HTIHH.

This sequence belongs to the sterol desaturase family. The cofactor is Fe cation.

Its subcellular location is the endoplasmic reticulum membrane. It catalyses the reaction a Delta(7)-sterol + 2 Fe(II)-[cytochrome b5] + O2 + 2 H(+) = a Delta(5),Delta(7)-sterol + 2 Fe(III)-[cytochrome b5] + 2 H2O. Its function is as follows. Involved in the biosynthesis of sitosterol and campesterol. The polypeptide is Delta(7)-sterol-C5(6)-desaturase (Nicotiana tabacum (Common tobacco)).